The following is a 94-amino-acid chain: Phosphoribosyl-ATP pyrophosphatase (94 aa).

Belongs to the PRA-PH family.

Its subcellular location is the cytoplasm. The catalysed reaction is 1-(5-phospho-beta-D-ribosyl)-ATP + H2O = 1-(5-phospho-beta-D-ribosyl)-5'-AMP + diphosphate + H(+). Its pathway is amino-acid biosynthesis; L-histidine biosynthesis; L-histidine from 5-phospho-alpha-D-ribose 1-diphosphate: step 2/9. The protein is Phosphoribosyl-ATP pyrophosphatase of Pyrobaculum calidifontis (strain DSM 21063 / JCM 11548 / VA1).